The chain runs to 70 residues: Conotoxin Cl9.1 (70 aa).

The signal sequence occupies residues 1–20 (MMGKLGVVLFICLVLFPLET). Residues 21-50 (LQLEGGQQADRHVDQLEGNPNRETRTIEVR) constitute a propeptide that is removed on maturation. 3 disulfide bridges follow: C51–C63, C56–C67, and C61–C70.

It belongs to the conotoxin M superfamily. Expressed by the venom duct.

The protein resides in the secreted. The protein is Conotoxin Cl9.1 of Californiconus californicus (California cone).